Consider the following 388-residue polypeptide: Mannitol-1-phosphate 5-dehydrogenase (388 aa).

5–16 (AIQFGGGNIGRG) contributes to the NAD(+) binding site. Lysine 213 is a catalytic residue.

It belongs to the mannitol dehydrogenase family. As to quaternary structure, monomer.

It carries out the reaction D-mannitol 1-phosphate + NAD(+) = beta-D-fructose 6-phosphate + NADH + H(+). Functionally, catalyzes the NAD(H)-dependent interconversion of D-fructose 6-phosphate and D-mannitol 1-phosphate in the metabolism of mannitol. Has a strong preference for NADH over NADPH. This is Mannitol-1-phosphate 5-dehydrogenase (mpdA) from Aspergillus niger (strain ATCC MYA-4892 / CBS 513.88 / FGSC A1513).